We begin with the raw amino-acid sequence, 264 residues long: Type III pantothenate kinase (264 aa).

6–13 serves as a coordination point for ATP; the sequence is DSGNSRLK. Residues tyrosine 92 and 99 to 102 each bind substrate; that span reads GADR. Aspartate 101 functions as the Proton acceptor in the catalytic mechanism. Residue threonine 127 participates in ATP binding. Threonine 177 serves as a coordination point for substrate.

The protein belongs to the type III pantothenate kinase family. As to quaternary structure, homodimer. NH4(+) serves as cofactor. K(+) is required as a cofactor.

The protein resides in the cytoplasm. It catalyses the reaction (R)-pantothenate + ATP = (R)-4'-phosphopantothenate + ADP + H(+). It participates in cofactor biosynthesis; coenzyme A biosynthesis; CoA from (R)-pantothenate: step 1/5. In terms of biological role, catalyzes the phosphorylation of pantothenate (Pan), the first step in CoA biosynthesis. This chain is Type III pantothenate kinase, found in Bordetella petrii (strain ATCC BAA-461 / DSM 12804 / CCUG 43448).